The chain runs to 132 residues: Small ribosomal subunit protein uS8 (132 aa).

This sequence belongs to the universal ribosomal protein uS8 family. In terms of assembly, part of the 30S ribosomal subunit. Contacts proteins S5 and S12.

In terms of biological role, one of the primary rRNA binding proteins, it binds directly to 16S rRNA central domain where it helps coordinate assembly of the platform of the 30S subunit. The polypeptide is Small ribosomal subunit protein uS8 (Bacillus velezensis (strain DSM 23117 / BGSC 10A6 / LMG 26770 / FZB42) (Bacillus amyloliquefaciens subsp. plantarum)).